The primary structure comprises 73 residues: UPF0435 protein lin1819 (73 aa).

This sequence belongs to the UPF0435 family.

This Listeria innocua serovar 6a (strain ATCC BAA-680 / CLIP 11262) protein is UPF0435 protein lin1819.